We begin with the raw amino-acid sequence, 204 residues long: MDFILNISMKMEVIFKTDLRSSSQVVFHAGSLYNWFSVEIINSGRIVTTAIKTLLSTVKYDIVKSAHIYAGQGYTEHQAQEEWNMILHVLFEEETESSASSESIHEKNDNETNECTSSFETLFEQEPSSEEPKDSKLYMLAQKTVQHIEQYGKAPDFNKVIRAHNFIQTIHGTPLKEEEKEVVRLMVIKLLKKNKLLSHLHLMF.

The protein belongs to the asfivirus phosphoprotein p30 family. As to quaternary structure, oligomer. Interacts with host HNRNPK. In terms of processing, phosphorylated on serine residues in the 115 N-terminal amino acids.

It is found in the host cytoplasm. The protein localises to the host nucleus. It localises to the virion. In terms of biological role, modifies the subcellular distribution of heterogeneous nuclear ribonucleoprotein K (HNRNPK) and may contribute to modulate HNRNPK functions related to processing and export of mRNAs during ASFV infection. Necessary for virus internalization. This African swine fever virus (strain Badajoz 1971 Vero-adapted) (Ba71V) protein is Phosphoprotein p30.